A 134-amino-acid polypeptide reads, in one-letter code: Transcription antitermination protein NusB (134 aa).

The protein belongs to the NusB family.

Its function is as follows. Involved in transcription antitermination. Required for transcription of ribosomal RNA (rRNA) genes. Binds specifically to the boxA antiterminator sequence of the ribosomal RNA (rrn) operons. The polypeptide is Transcription antitermination protein NusB (Shewanella sp. (strain MR-4)).